We begin with the raw amino-acid sequence, 972 residues long: Hemoglobin and hemoglobin-haptoglobin-binding protein (972 aa).

An N-terminal signal peptide occupies residues 1 to 22 (MKANKLSAITLCILGYAHTVYA). Residues 32-39 (ETIVVSSE) carry the TonB box motif. Residues 38 to 167 (SEDDSVHNKN…LGGTVSFESK (130 aa)) form the TBDR plug domain. In terms of domain architecture, TBDR beta-barrel spans 175 to 972 (DKNYHFGYKT…NFRVNAEITF (798 aa)). The short motif at 955-972 (KRFNAPGRNFRVNAEITF) is the TonB C-terminal box element.

It belongs to the TonB-dependent receptor family. Hemoglobin/haptoglobin binding protein subfamily.

It is found in the cell outer membrane. In terms of biological role, acts as a receptor for hemoglobin or the hemoglobin/haptoglobin complex of the host and is required for heme uptake. May be involved in virulence. The protein is Hemoglobin and hemoglobin-haptoglobin-binding protein of Haemophilus ducreyi (strain 35000HP / ATCC 700724).